Reading from the N-terminus, the 353-residue chain is Photosystem II D2 protein (353 aa).

Residue Thr2 is modified to N-acetylthreonine. Residue Thr2 is modified to Phosphothreonine. Residues 41 to 61 (CAYFAVGGWFTGTTFVTSWYT) form a helical membrane-spanning segment. His118 lines the chlorophyll a pocket. A helical transmembrane segment spans residues 125–141 (GFMLRQFELARSVQLRP). 2 residues coordinate pheophytin a: Gln130 and Asn143. The chain crosses the membrane as a helical span at residues 153 to 166 (VFVSVFLIYPLGQS). His198 is a binding site for chlorophyll a. The helical transmembrane segment at 208–228 (AALLCAIHGATVENTLFEDGD) threads the bilayer. A plastoquinone-binding residues include His215 and Phe262. Fe cation is bound at residue His215. His269 lines the Fe cation pocket. The helical transmembrane segment at 279–295 (GLWMSALGVVGLALNLR) threads the bilayer.

Belongs to the reaction center PufL/M/PsbA/D family. As to quaternary structure, PSII is composed of 1 copy each of membrane proteins PsbA, PsbB, PsbC, PsbD, PsbE, PsbF, PsbH, PsbI, PsbJ, PsbK, PsbL, PsbM, PsbT, PsbX, PsbY, PsbZ, Psb30/Ycf12, at least 3 peripheral proteins of the oxygen-evolving complex and a large number of cofactors. It forms dimeric complexes. The cofactor is The D1/D2 heterodimer binds P680, chlorophylls that are the primary electron donor of PSII, and subsequent electron acceptors. It shares a non-heme iron and each subunit binds pheophytin, quinone, additional chlorophylls, carotenoids and lipids. There is also a Cl(-1) ion associated with D1 and D2, which is required for oxygen evolution. The PSII complex binds additional chlorophylls, carotenoids and specific lipids..

Its subcellular location is the plastid. It is found in the chloroplast thylakoid membrane. It catalyses the reaction 2 a plastoquinone + 4 hnu + 2 H2O = 2 a plastoquinol + O2. In terms of biological role, photosystem II (PSII) is a light-driven water:plastoquinone oxidoreductase that uses light energy to abstract electrons from H(2)O, generating O(2) and a proton gradient subsequently used for ATP formation. It consists of a core antenna complex that captures photons, and an electron transfer chain that converts photonic excitation into a charge separation. The D1/D2 (PsbA/PsbD) reaction center heterodimer binds P680, the primary electron donor of PSII as well as several subsequent electron acceptors. D2 is needed for assembly of a stable PSII complex. This is Photosystem II D2 protein from Jasminum nudiflorum (Winter jasmine).